The chain runs to 180 residues: Translation initiation factor IF-3 (180 aa).

Belongs to the IF-3 family. Monomer.

It localises to the cytoplasm. Functionally, IF-3 binds to the 30S ribosomal subunit and shifts the equilibrium between 70S ribosomes and their 50S and 30S subunits in favor of the free subunits, thus enhancing the availability of 30S subunits on which protein synthesis initiation begins. The protein is Translation initiation factor IF-3 of Pasteurella multocida (strain Pm70).